We begin with the raw amino-acid sequence, 529 residues long: Cytochrome P450 monooxygenase acuD (529 aa).

Residues 8-28 (FAVIAASAAAVAGVLFLIYAA) traverse the membrane as a helical segment. Residue Asn81 is glycosylated (N-linked (GlcNAc...) asparagine). Residue Cys449 participates in heme binding.

The protein belongs to the cytochrome P450 family. The cofactor is heme.

It localises to the endoplasmic reticulum membrane. It carries out the reaction 3-hydroxybenzyl alcohol + reduced [NADPH--hemoprotein reductase] + O2 = gentisyl alcohol + oxidized [NADPH--hemoprotein reductase] + H2O + H(+). Its pathway is secondary metabolite biosynthesis. Functionally, cytochrome P450 monooxygenase; part of the gene cluster that mediates the biosynthesis of aculins. The pathway begins with the synthesis of 6-methylsalicylic acid by the polyketide synthase (PKS) acuA via condensation of acetate and malonate units. The 6-methylsalicylic acid decarboxylase acuB then catalyzes the decarboxylation of 6-methylsalicylic acid to yield m-cresol (also known as 3-methylphenol). These first reactions occur in the cytosol. The intermediate m-cresol is then transported into the endoplasmic reticulum where the cytochrome P450 monooxygenase acuC converts it to m-hydroxybenzyl alcohol, which is further converted to gentisyl alcohol by the cytochrome P450 monooxygenase acuD. Gentisyl alcohol is further oxidized by the oxidoreductase acuE that probably catalyzes hydroxylation of the aromatic ring. The aromatic system might then be opened by oxidation through a Baeyer-Villiger type of oxidation, which could be catalyzed by acuF, with the carboxylic acid at C-1 subsequently reduced to an aldehyde by acuG. Subsequently, a hemiacetal is formed, before the dehydrogenase acuH would reduce the double bond between C-4 and C-6. Finally, keto-enol tautomerism results in formation of aculinic acid, which exists as two diastereomers (both R/S configurations at C-1) by non-enzymatic hemiacetal formation. The carboxypeptidase acuI could be involved in the linking of aculinic acid to an aculene A moiety produced by the aculene biosynthesis cluster and which leads to the production of aculin A. AcuI may also be involved in the attachment of proline to aculinic acid to form epi-aculins A and B. The protein is Cytochrome P450 monooxygenase acuD of Aspergillus aculeatus (strain ATCC 16872 / CBS 172.66 / WB 5094).